The primary structure comprises 256 residues: 1-(5-phosphoribosyl)-5-[(5-phosphoribosylamino)methylideneamino] imidazole-4-carboxamide isomerase (256 aa).

The Proton acceptor role is filled by D8. The active-site Proton donor is D130.

It belongs to the HisA/HisF family.

Its subcellular location is the cytoplasm. The catalysed reaction is 1-(5-phospho-beta-D-ribosyl)-5-[(5-phospho-beta-D-ribosylamino)methylideneamino]imidazole-4-carboxamide = 5-[(5-phospho-1-deoxy-D-ribulos-1-ylimino)methylamino]-1-(5-phospho-beta-D-ribosyl)imidazole-4-carboxamide. It functions in the pathway amino-acid biosynthesis; L-histidine biosynthesis; L-histidine from 5-phospho-alpha-D-ribose 1-diphosphate: step 4/9. The chain is 1-(5-phosphoribosyl)-5-[(5-phosphoribosylamino)methylideneamino] imidazole-4-carboxamide isomerase from Chlorobium phaeovibrioides (strain DSM 265 / 1930) (Prosthecochloris vibrioformis (strain DSM 265)).